The primary structure comprises 432 residues: Phytase AppA (432 aa).

The N-terminal stretch at M1–A22 is a signal peptide. Residue R38 participates in 1D-myo-inositol hexakisphosphate binding. The Nucleophile role is filled by H39. Residues R42–K46 and R114 each bind 1D-myo-inositol hexakisphosphate. Disulfide bonds link C99–C130, C155–C430, C200–C210, and C404–C413. 1D-myo-inositol hexakisphosphate is bound by residues R289 and H325 to T327. The Proton donor role is filled by D326.

It belongs to the histidine acid phosphatase family. As to quaternary structure, monomer.

Its subcellular location is the periplasm. It catalyses the reaction 1D-myo-inositol hexakisphosphate + H2O = 1D-myo-inositol 1,2,3,4,5-pentakisphosphate + phosphate. The enzyme catalyses 1D-myo-inositol 1,2,3,4,5-pentakisphosphate + H2O = 1D-myo-inositol 2,3,4,5-tetrakisphosphate + phosphate. It carries out the reaction 1D-myo-inositol 2,3,4,5-tetrakisphosphate + H2O = 1D-myo-inositol 2,4,5-triphosphate + phosphate. The catalysed reaction is 1D-myo-inositol 2,4,5-triphosphate + H2O = 1D-myo-inositol 2,5-bisphosphate + phosphate. It catalyses the reaction 1D-myo-inositol 2,5-bisphosphate + H2O = 1D-myo-inositol 2-phosphate + phosphate. The enzyme catalyses GTP + H2O = GDP + phosphate + H(+). Its activity is regulated as follows. Contains three consecutive and one non-consecutive disulfide bonds and shows a strong dependence on DsbC for its full activity. Competitively inhibited by tartaric acid and by sodium fluorid. Catalyzes the hydrolysis of phytate (or myo-inositol hexakisphosphate, an indigestible organic form of phosphorus that is found in many plant tissues) to myo-inositol and inorganic phosphate. Dephosphorylates phytate in a stereospecific way by sequential removal of phosphate groups to produce myo-inositol 2-monophosphate. Also shows phosphoanhydride phosphatase activity and hydrolyzes the distal phosphoryl residues of GTP, the 5'-beta-phosphoryl residue of the regulatory nucleotide ppGpp and tripolyphosphates. Does not split most phosphomonoesters with the exception of the synthetic substrate p-nitrophenyl phosphate (pNPP), 2,3-bisphosphoglycerate and fructose 1,6-bisphosphate. This Escherichia coli (strain K12) protein is Phytase AppA.